A 96-amino-acid chain; its full sequence is Large ribosomal subunit protein eL21 (96 aa).

Belongs to the eukaryotic ribosomal protein eL21 family.

The protein is Large ribosomal subunit protein eL21 of Methanosphaerula palustris (strain ATCC BAA-1556 / DSM 19958 / E1-9c).